We begin with the raw amino-acid sequence, 158 residues long: 6,7-dimethyl-8-ribityllumazine synthase (158 aa).

5-amino-6-(D-ribitylamino)uracil contacts are provided by residues Phe-22, 57–59, and 81–83; these read AYE and AVI. 86-87 lines the (2S)-2-hydroxy-3-oxobutyl phosphate pocket; that stretch reads GT. His-89 (proton donor) is an active-site residue. Phe-114 is a binding site for 5-amino-6-(D-ribitylamino)uracil. A (2S)-2-hydroxy-3-oxobutyl phosphate-binding site is contributed by Arg-128.

The protein belongs to the DMRL synthase family. In terms of assembly, forms an icosahedral capsid composed of 60 subunits, arranged as a dodecamer of pentamers.

The enzyme catalyses (2S)-2-hydroxy-3-oxobutyl phosphate + 5-amino-6-(D-ribitylamino)uracil = 6,7-dimethyl-8-(1-D-ribityl)lumazine + phosphate + 2 H2O + H(+). The protein operates within cofactor biosynthesis; riboflavin biosynthesis; riboflavin from 2-hydroxy-3-oxobutyl phosphate and 5-amino-6-(D-ribitylamino)uracil: step 1/2. Its function is as follows. Catalyzes the formation of 6,7-dimethyl-8-ribityllumazine by condensation of 5-amino-6-(D-ribitylamino)uracil with 3,4-dihydroxy-2-butanone 4-phosphate. This is the penultimate step in the biosynthesis of riboflavin. The protein is 6,7-dimethyl-8-ribityllumazine synthase of Pseudoalteromonas atlantica (strain T6c / ATCC BAA-1087).